The primary structure comprises 360 residues: UDP-N-acetylglucosamine--N-acetylmuramyl-(pentapeptide) pyrophosphoryl-undecaprenol N-acetylglucosamine transferase (360 aa).

Residues 13–15, Asn-125, Arg-164, Ser-191, and Gln-290 contribute to the UDP-N-acetyl-alpha-D-glucosamine site; that span reads TGG.

Belongs to the glycosyltransferase 28 family. MurG subfamily.

The protein resides in the cell inner membrane. The catalysed reaction is di-trans,octa-cis-undecaprenyl diphospho-N-acetyl-alpha-D-muramoyl-L-alanyl-D-glutamyl-meso-2,6-diaminopimeloyl-D-alanyl-D-alanine + UDP-N-acetyl-alpha-D-glucosamine = di-trans,octa-cis-undecaprenyl diphospho-[N-acetyl-alpha-D-glucosaminyl-(1-&gt;4)]-N-acetyl-alpha-D-muramoyl-L-alanyl-D-glutamyl-meso-2,6-diaminopimeloyl-D-alanyl-D-alanine + UDP + H(+). It functions in the pathway cell wall biogenesis; peptidoglycan biosynthesis. In terms of biological role, cell wall formation. Catalyzes the transfer of a GlcNAc subunit on undecaprenyl-pyrophosphoryl-MurNAc-pentapeptide (lipid intermediate I) to form undecaprenyl-pyrophosphoryl-MurNAc-(pentapeptide)GlcNAc (lipid intermediate II). This Hahella chejuensis (strain KCTC 2396) protein is UDP-N-acetylglucosamine--N-acetylmuramyl-(pentapeptide) pyrophosphoryl-undecaprenol N-acetylglucosamine transferase.